The primary structure comprises 42 residues: Crotamine Ile-19 (42 aa).

3 cysteine pairs are disulfide-bonded: C4–C36, C11–C30, and C18–C37.

It belongs to the crotamine-myotoxin family. In terms of assembly, monomer. As to expression, expressed by the venom gland.

The protein resides in the secreted. Functionally, cationic peptide that possesses multiple functions. It acts as a cell-penetrating peptide (CPP), and as a potent voltage-gated potassium channel (Kv) inhibitor, it induces severe muscle necrosis by a non-enzymatic mechanism and exhibits antimicrobial activities. It also elicits a short-lasting hyperextension of the hind limb. It does not cause observable tissue damage (whereas the whole venom causes severe myonecrosis accompanied by edema and hemorrhage). The protein is Crotamine Ile-19 of Crotalus durissus ruruima (South American rattlesnake).